Reading from the N-terminus, the 379-residue chain is Gonadotropin-releasing hormone II receptor (379 aa).

Topologically, residues 1–40 (MSAGNGTPWGSAVGEEAWAGSGVAVEGSELPTFSTAAKVR) are extracellular. The chain crosses the membrane as a helical span at residues 41–60 (VGVTIVLFVSSAGGNLAVLW). The Cytoplasmic portion of the chain corresponds to 61–76 (SVTRPQPSQLRPSPVR). A helical transmembrane segment spans residues 77-96 (TLFAHLAAADLLVTFVVMPL). Residues 97 to 114 (DATWNITVQWLAGDIACR) are Extracellular-facing. Asparagine 101 carries an N-linked (GlcNAc...) asparagine glycan. A disulfide bridge links cysteine 113 with cysteine 188. A helical membrane pass occupies residues 115 to 136 (TLMFLKLMAMYSAAFLPVVIGL). The Cytoplasmic segment spans residues 137-160 (DRQAAVLNPLGSRSGVRKLLGAAW). The helical transmembrane segment at 161-178 (GLSFLLALPQLFLFHTVH) threads the bilayer. The Extracellular segment spans residues 179–204 (RAGPVPFTQCVTKGSFKARWQETTYN). A helical transmembrane segment spans residues 205 to 224 (LFTFCCLFLLPLIAMAICYS). The Cytoplasmic segment spans residues 225 to 278 (RIVLSVSSPQTRKGSHAPAGEFALRRSFDNRPRVCLRALRLALLILLTFILCWT). The chain crosses the membrane as a helical span at residues 279–297 (PYYLLGLWYWFSPTMLTEV). Residues 298-303 (PPSLSH) are Extracellular-facing. Residues 304–323 (ILFLFGLLNAPLDPLLYGAF) form a helical membrane-spanning segment. Over 324 to 379 (TFGCRRGHQELSIDSSKEGSGRMLQQEIHALRQQEVQKTVTSRSAGETKGISITSI) the chain is Cytoplasmic.

The protein belongs to the G-protein coupled receptor 1 family. Phosphorylated on the C-terminal cytoplasmic tail.

Its subcellular location is the cell membrane. Functionally, receptor for gonadotropin releasing hormone II (GnRH II). This receptor mediates its action by association with G proteins that activate a phosphatidylinositol-calcium second messenger system. The polypeptide is Gonadotropin-releasing hormone II receptor (GNRHR2) (Chlorocebus aethiops (Green monkey)).